The primary structure comprises 524 residues: Casein kinase I homolog 3 (524 aa).

In terms of domain architecture, Protein kinase spans 14-319; that stretch reads YAVGPKIGEG…YLISLMDDAL (306 aa). ATP is bound by residues 20-28 and Lys60; that span reads IGEGSFGVI. The active-site Proton acceptor is the Asp150. Disordered stretches follow at residues 352-414 and 427-474; these read HGYG…KQQH and PETH…EHNL. Residues 360–373 show a composition bias toward low complexity; the sequence is RVNGNTARNNVNTN. Polar residues-rich tracts occupy residues 374–413 and 429–474; these read SKTR…TKQQ and THSN…EHNL. The YXXZ targeting signal signature appears at 444–447; sequence YDSI. Residues Cys517, Cys518, Cys519, Cys520, Cys522, Cys523, and Cys524 are each lipidated (S-palmitoyl cysteine).

Belongs to the protein kinase superfamily. CK1 Ser/Thr protein kinase family. Casein kinase I subfamily.

It localises to the cell membrane. Its subcellular location is the nucleus membrane. It is found in the vacuole membrane. It catalyses the reaction L-seryl-[protein] + ATP = O-phospho-L-seryl-[protein] + ADP + H(+). The enzyme catalyses L-threonyl-[protein] + ATP = O-phospho-L-threonyl-[protein] + ADP + H(+). Casein kinases are operationally defined by their preferential utilization of acidic proteins such as caseins as substrates. Phosphorylates MON1, inhibiting the guanine nucleotide exchange factor activity of the MON1-CCZ1 complex, possibly by preventing its recruitment to membranes by small GTPase RAB5 homologs. This Saccharomyces cerevisiae (strain ATCC 204508 / S288c) (Baker's yeast) protein is Casein kinase I homolog 3 (YCK3).